We begin with the raw amino-acid sequence, 369 residues long: UDP-3-O-acylglucosamine N-acyltransferase (369 aa).

His263 (proton acceptor) is an active-site residue.

Belongs to the transferase hexapeptide repeat family. LpxD subfamily. Homotrimer.

The enzyme catalyses a UDP-3-O-[(3R)-3-hydroxyacyl]-alpha-D-glucosamine + a (3R)-hydroxyacyl-[ACP] = a UDP-2-N,3-O-bis[(3R)-3-hydroxyacyl]-alpha-D-glucosamine + holo-[ACP] + H(+). The protein operates within bacterial outer membrane biogenesis; LPS lipid A biosynthesis. Functionally, catalyzes the N-acylation of UDP-3-O-acylglucosamine using 3-hydroxyacyl-ACP as the acyl donor. Is involved in the biosynthesis of lipid A, a phosphorylated glycolipid that anchors the lipopolysaccharide to the outer membrane of the cell. The chain is UDP-3-O-acylglucosamine N-acyltransferase from Burkholderia ambifaria (strain MC40-6).